Reading from the N-terminus, the 738-residue chain is MTTNELSPEEVRDSKIYIEWGLTEQEYDLIVKELKRLPNFTETGIFSGMWSEHVSYKKSKPILRKFWSSNERVLQGPGEGAGILDIGDNQAVVFKAESHNHPSFVEPYEGAATGVGGILRDIFSMGAQPIAVLDSLRFGELDNAHTKHIVDGVIAGIAGYGNAIGIPTVGGEIGFDGVYAGNPLVNVMAVGLMDQNAMQVGQAKGIGNSIIYVGAKTGRDGINGASFASAEFSSAEKSDRSAVQVGDPFLEKLVMDATLQAIREHSDIIVGIQDMGAAGLLSSSSEMAAKAGMGIHLNLDMVPQRETGMTPYELMLSESQERMVLVVKKGEEQAIIDLFQSADLDAVIIGQVTDDGRYRLNFKNEVVADVPVDFLTHAPKQDLPMIEPARLANFTDEQFEPDMGNVKETILTLLAQPTIASKASLFRHFDSQVRADTAIKPGGDAALIRIRDTQKALAMTTDVNARYLYLNPRVGAKMAVAEAARNIVSTGAKPIGITDGLNFGSPDNPEVYYELDQAVAGINDVAKQLDTPIISGNVSLYNETDGQAIYPTPMIGMVGLLEDITKATRTAFQKAGDNIYLVGRTKDSFNGSEIQKMQTGHIAGQLFDFNDEDELAAQQVILDVTDQRLLNSAHDLSEGGLIVGLLESAFAGNLGFDISVDLADKYLFSETPSRFVVSVSPENRTTFESLAGDRVIKLGVVTADDTINITTTTSDIQLSLIETKKIYQESIAWKLNAE.

H53 is a catalytic residue. Residues Y56 and K95 each contribute to the ATP site. E97 contributes to the Mg(2+) binding site. Substrate-binding positions include 98–101 (SHNH) and R120. H99 functions as the Proton acceptor in the catalytic mechanism. Position 121 (D121) interacts with Mg(2+). Residue Q244 coordinates substrate. Mg(2+) is bound at residue D274. A substrate-binding site is contributed by 318–320 (ESQ). 2 residues coordinate ATP: D499 and G536. Position 537 (N537) interacts with Mg(2+). Residue S539 participates in substrate binding.

This sequence belongs to the FGAMS family. Monomer. Part of the FGAM synthase complex composed of 1 PurL, 1 PurQ and 2 PurS subunits.

Its subcellular location is the cytoplasm. The catalysed reaction is N(2)-formyl-N(1)-(5-phospho-beta-D-ribosyl)glycinamide + L-glutamine + ATP + H2O = 2-formamido-N(1)-(5-O-phospho-beta-D-ribosyl)acetamidine + L-glutamate + ADP + phosphate + H(+). Its pathway is purine metabolism; IMP biosynthesis via de novo pathway; 5-amino-1-(5-phospho-D-ribosyl)imidazole from N(2)-formyl-N(1)-(5-phospho-D-ribosyl)glycinamide: step 1/2. In terms of biological role, part of the phosphoribosylformylglycinamidine synthase complex involved in the purines biosynthetic pathway. Catalyzes the ATP-dependent conversion of formylglycinamide ribonucleotide (FGAR) and glutamine to yield formylglycinamidine ribonucleotide (FGAM) and glutamate. The FGAM synthase complex is composed of three subunits. PurQ produces an ammonia molecule by converting glutamine to glutamate. PurL transfers the ammonia molecule to FGAR to form FGAM in an ATP-dependent manner. PurS interacts with PurQ and PurL and is thought to assist in the transfer of the ammonia molecule from PurQ to PurL. The sequence is that of Phosphoribosylformylglycinamidine synthase subunit PurL from Leuconostoc mesenteroides subsp. mesenteroides (strain ATCC 8293 / DSM 20343 / BCRC 11652 / CCM 1803 / JCM 6124 / NCDO 523 / NBRC 100496 / NCIMB 8023 / NCTC 12954 / NRRL B-1118 / 37Y).